Reading from the N-terminus, the 198-residue chain is MKTPSSLDFLTEALRRLPGVGPKSAQRMAYHLMQHDRDGAAMLGRALSQAVEKVQHCAMCNTFTEHEVCETCLDAERNPALLCVVETPGDQLMIEQTLTFKGLYFVLMGRLSPLDGIGPKDIHLEKLISRATDGIVQEVVLATNFTNEGEATAHYISETLKARGLKVSRLARGVPVGGELEYVDAGTIARAMLDRRTT.

A C4-type zinc finger spans residues 57-72 (CAMCNTFTEHEVCETC). In terms of domain architecture, Toprim spans 80–175 (ALLCVVETPG…KVSRLARGVP (96 aa)).

The protein belongs to the RecR family.

Its function is as follows. May play a role in DNA repair. It seems to be involved in an RecBC-independent recombinational process of DNA repair. It may act with RecF and RecO. The chain is Recombination protein RecR from Janthinobacterium sp. (strain Marseille) (Minibacterium massiliensis).